Reading from the N-terminus, the 340-residue chain is Flavonoid 7-O-methyltransferase 2 (340 aa).

Residue D207 participates in S-adenosyl-L-methionine binding. Catalysis depends on H245, which acts as the Proton acceptor.

This sequence belongs to the class I-like SAM-binding methyltransferase superfamily. Cation-independent O-methyltransferase family. As to quaternary structure, homodimer. As to expression, expressed in leaves.

It carries out the reaction scutellarein 4'-methyl ether + S-adenosyl-L-methionine = ladanein + S-adenosyl-L-homocysteine. The enzyme catalyses acacetin + S-adenosyl-L-methionine = apigenin 4',7-dimethyl ether + S-adenosyl-L-homocysteine. It catalyses the reaction diosmetin + S-adenosyl-L-methionine = luteolin 4',7-dimethyl ether + S-adenosyl-L-homocysteine. The catalysed reaction is chrysoeriol + S-adenosyl-L-methionine = velutin + S-adenosyl-L-homocysteine. It carries out the reaction (2S)-naringenin + S-adenosyl-L-methionine = (2S)-sakuranetin + S-adenosyl-L-homocysteine + H(+). The enzyme catalyses apigenin + S-adenosyl-L-methionine = genkwanin + S-adenosyl-L-homocysteine + H(+). It catalyses the reaction luteolin + S-adenosyl-L-methionine = luteolin 7-methyl ether + S-adenosyl-L-homocysteine + H(+). The catalysed reaction is scutellarein + S-adenosyl-L-methionine = scutellarein 7-methyl ether + S-adenosyl-L-homocysteine. It functions in the pathway flavonoid metabolism. Functionally, flavonoid 7-O-methyltransferase involved in the biosynthesis of polymethoxylated flavonoids natural products such as nevadensin and salvigenin, aroma compounds which contribute to the flavor of sweet basil, and exhibit pharmacological activities such as anti-allergic, anti-oxidant, antibacterial, anti-proliferative, and anti-inflammatory effects. Catalyzes S-adenosylmethionine-dependent regioselective 7-O-methylation of flavonoids; active on various hydroxylated flavonoid substrates, including apigenin (API) and luteolin (LUT), and, with a lower efficiency, scutellarein (SCU), naringenin (NAR), chrysoeriol (CHRYS), diosmetin (DIOS), acacetin (ACA) and scutellarein-7-methyl ether (SCU7Me). The polypeptide is Flavonoid 7-O-methyltransferase 2 (Ocimum basilicum (Sweet basil)).